The primary structure comprises 37 residues: Large ribosomal subunit protein bL36A (37 aa).

It belongs to the bacterial ribosomal protein bL36 family.

This is Large ribosomal subunit protein bL36A from Arthrobacter sp. (strain FB24).